A 139-amino-acid chain; its full sequence is Acidic phospholipase A2 5 (139 aa).

The N-terminal stretch at 1–16 (MRTLWIVAVWLMGVEG) is a signal peptide. Disulfide bonds link Cys42–Cys131, Cys44–Cys60, Cys59–Cys111, Cys65–Cys139, Cys66–Cys104, Cys73–Cys97, and Cys91–Cys102. Positions 43, 45, and 47 each coordinate Ca(2+). The active site involves His63. Asp64 contacts Ca(2+). Residue Asp105 is part of the active site.

The protein belongs to the phospholipase A2 family. Group II subfamily. D49 sub-subfamily. The cofactor is Ca(2+). As to expression, expressed by the venom gland.

The protein localises to the secreted. The enzyme catalyses a 1,2-diacyl-sn-glycero-3-phosphocholine + H2O = a 1-acyl-sn-glycero-3-phosphocholine + a fatty acid + H(+). Functionally, PLA2 catalyzes the calcium-dependent hydrolysis of the 2-acyl groups in 3-sn-phosphoglycerides. This Echis pyramidum leakeyi (Leakey's carpet viper) protein is Acidic phospholipase A2 5.